A 689-amino-acid polypeptide reads, in one-letter code: Beta-galactosidase BbgII (689 aa).

Substrate contacts are provided by R122 and N160. E161 functions as the Proton donor in the catalytic mechanism. Catalysis depends on E320, which acts as the Nucleophile. Substrate-binding positions include W328 and 368-371 (EKWH).

Belongs to the glycosyl hydrolase 42 family.

The enzyme catalyses Hydrolysis of terminal non-reducing beta-D-galactose residues in beta-D-galactosides.. In Bifidobacterium bifidum (strain DSM 20082 / JCM 1254 / BCRC 11844 / KCTC 3440 / E319f (Variant a)), this protein is Beta-galactosidase BbgII.